Consider the following 304-residue polypeptide: Quorum-quenching protein AidA (304 aa).

Belongs to the AB hydrolase superfamily.

Involved in quorum quenching (QQ). Inhibits motility and biofilm formation. Could contribute in bacterial competition, as it is capable of hydrolyzing the signaling molecules that mediate interspecies communication. This Acinetobacter baumannii (strain MDR-ZJ06) protein is Quorum-quenching protein AidA.